The following is a 291-amino-acid chain: Phosphate import ATP-binding protein PstB (291 aa).

The region spanning 44–286 is the ABC transporter domain; the sequence is VKAREVNVFY…PEEKRTQDYI (243 aa). An ATP-binding site is contributed by 76-83; sequence GPSGCGKS.

This sequence belongs to the ABC transporter superfamily. Phosphate importer (TC 3.A.1.7) family. The complex is composed of two ATP-binding proteins (PstB), two transmembrane proteins (PstC and PstA) and a solute-binding protein (PstS).

The protein localises to the cell inner membrane. The catalysed reaction is phosphate(out) + ATP + H2O = ADP + 2 phosphate(in) + H(+). Its function is as follows. Part of the ABC transporter complex PstSACB involved in phosphate import. Responsible for energy coupling to the transport system. This Chelativorans sp. (strain BNC1) protein is Phosphate import ATP-binding protein PstB.